The primary structure comprises 246 residues: Probable transcriptional regulatory protein WD_0484 (246 aa).

Positions 1 to 22 (MAGHSQFSNIKHRKGAQDAKRS) are disordered.

Belongs to the TACO1 family.

The protein localises to the cytoplasm. The protein is Probable transcriptional regulatory protein WD_0484 of Wolbachia pipientis wMel.